A 76-amino-acid chain; its full sequence is ATP synthase subunit c (76 aa).

2 helical membrane passes run 12 to 32 (LGSI…GIIF) and 54 to 74 (ILGF…PFVY).

It belongs to the ATPase C chain family. In terms of assembly, F-type ATPases have 2 components, F(1) - the catalytic core - and F(0) - the membrane proton channel. F(1) has five subunits: alpha(3), beta(3), gamma(1), delta(1), epsilon(1). F(0) has three main subunits: a(1), b(2) and c(10-14). The alpha and beta chains form an alternating ring which encloses part of the gamma chain. F(1) is attached to F(0) by a central stalk formed by the gamma and epsilon chains, while a peripheral stalk is formed by the delta and b chains.

Its subcellular location is the cell membrane. Functionally, f(1)F(0) ATP synthase produces ATP from ADP in the presence of a proton or sodium gradient. F-type ATPases consist of two structural domains, F(1) containing the extramembraneous catalytic core and F(0) containing the membrane proton channel, linked together by a central stalk and a peripheral stalk. During catalysis, ATP synthesis in the catalytic domain of F(1) is coupled via a rotary mechanism of the central stalk subunits to proton translocation. Key component of the F(0) channel; it plays a direct role in translocation across the membrane. A homomeric c-ring of between 10-14 subunits forms the central stalk rotor element with the F(1) delta and epsilon subunits. The sequence is that of ATP synthase subunit c from Streptomyces coelicolor (strain ATCC BAA-471 / A3(2) / M145).